The chain runs to 116 residues: Iron-sulfur cluster insertion protein ErpA (116 aa).

Iron-sulfur cluster contacts are provided by C44, C108, and C110.

Belongs to the HesB/IscA family. As to quaternary structure, homodimer. Iron-sulfur cluster serves as cofactor.

Required for insertion of 4Fe-4S clusters for at least IspG. This is Iron-sulfur cluster insertion protein ErpA from Shewanella oneidensis (strain ATCC 700550 / JCM 31522 / CIP 106686 / LMG 19005 / NCIMB 14063 / MR-1).